Consider the following 954-residue polypeptide: Bifunctional glutamine synthetase adenylyltransferase/adenylyl-removing enzyme (954 aa).

The tract at residues 1–450 is adenylyl removase; the sequence is MENISNKPLS…HFIETVGGRT (450 aa). The tract at residues 454–954 is adenylyl transferase; it reads GADLWTQQLW…MDIYQRILVD (501 aa).

It belongs to the GlnE family. It depends on Mg(2+) as a cofactor.

It catalyses the reaction [glutamine synthetase]-O(4)-(5'-adenylyl)-L-tyrosine + phosphate = [glutamine synthetase]-L-tyrosine + ADP. The catalysed reaction is [glutamine synthetase]-L-tyrosine + ATP = [glutamine synthetase]-O(4)-(5'-adenylyl)-L-tyrosine + diphosphate. Involved in the regulation of glutamine synthetase GlnA, a key enzyme in the process to assimilate ammonia. When cellular nitrogen levels are high, the C-terminal adenylyl transferase (AT) inactivates GlnA by covalent transfer of an adenylyl group from ATP to specific tyrosine residue of GlnA, thus reducing its activity. Conversely, when nitrogen levels are low, the N-terminal adenylyl removase (AR) activates GlnA by removing the adenylyl group by phosphorolysis, increasing its activity. The regulatory region of GlnE binds the signal transduction protein PII (GlnB) which indicates the nitrogen status of the cell. This chain is Bifunctional glutamine synthetase adenylyltransferase/adenylyl-removing enzyme, found in Shewanella woodyi (strain ATCC 51908 / MS32).